We begin with the raw amino-acid sequence, 168 residues long: Photosystem I assembly protein Ycf3 (168 aa).

3 TPR repeats span residues 35 to 68 (AFTYYRDGMSAQSEGNYAEALQNYYEAMRLEIDP), 72 to 105 (SYILYNIGLIHTSNGEHTKALEYYFRALERNPFL), and 120 to 153 (GEQAIQQGDSEIAEAWFDQAAEYWKQAIALTPGN).

The protein belongs to the Ycf3 family.

The protein resides in the plastid. Its subcellular location is the chloroplast thylakoid membrane. Essential for the assembly of the photosystem I (PSI) complex. May act as a chaperone-like factor to guide the assembly of the PSI subunits. The sequence is that of Photosystem I assembly protein Ycf3 from Solanum tuberosum (Potato).